Consider the following 1488-residue polypeptide: WD repeat-containing protein 7 (1488 aa).

WD repeat units follow at residues 17–56 (APTHCISSILLTDDGGTIVTGCHDGQICLWDLSEELEVNP), 62–104 (GHTA…CIEF), 156–199 (ISPD…SGLQ), 324–366 (VICP…DKQE), 404–443 (NEPLKVTASVYIPAHGRLVCGREDGSIIIVPATQTAIVQL), 462–507 (GHRN…MKHI), and 558–597 (RHLFPIQVIKWRPSDDYLVVGCTDGSVCVWQMDTGALDRC). Disordered regions lie at residues 761-781 (EEEDEEEVMRQRREESDPEYR) and 911-947 (GDHMKKGPTRPPRPGTPDLSKARDSPPASSNIVQGQI). Over residues 768-781 (VMRQRREESDPEYR) the composition is skewed to basic and acidic residues. Phosphoserine is present on Ser-935. Residues 937 to 947 (PASSNIVQGQI) show a composition bias toward polar residues. 2 WD repeats span residues 1349–1388 (PAICRFYMVSYYERSHRIAVGARHGSVALYDIRTGKCQTI) and 1390–1430 (GHKG…LGSI). Ser-1454 is subject to Phosphoserine.

This Rattus norvegicus (Rat) protein is WD repeat-containing protein 7 (Wdr7).